Here is a 710-residue protein sequence, read N- to C-terminus: Adenylosuccinate synthetase (710 aa).

2 disordered regions span residues 1–51 (MPVR…PVPQ) and 84–111 (DEPPHGSQKSLSVAPYTANASSSSGRSK). 2 stretches are compositionally biased toward polar residues: residues 10–27 (YNNSSPGVSNALSPSTTA) and 101–111 (ANASSSSGRSK). Residues 180–186 (GDEGKGK) and 210–212 (GHT) each bind GTP. D181 (proton acceptor) is an active-site residue. Mg(2+) is bound by residues D181 and G210. IMP is bound by residues 181–184 (DEGK), 208–211 (NAGH), T295, K309, Q421, T437, and K567. H211 functions as the Proton donor in the catalytic mechanism. 563-569 (AVTKKPR) provides a ligand contact to substrate. Residues R569 and 697-699 (GNG) each bind GTP.

This sequence belongs to the adenylosuccinate synthetase family. In terms of assembly, homodimer. Mg(2+) is required as a cofactor.

It is found in the cytoplasm. It carries out the reaction IMP + L-aspartate + GTP = N(6)-(1,2-dicarboxyethyl)-AMP + GDP + phosphate + 2 H(+). It participates in purine metabolism; AMP biosynthesis via de novo pathway; AMP from IMP: step 1/2. Its function is as follows. Plays an important role in the salvage pathway for purine nucleotide biosynthesis. Catalyzes the first committed step in the biosynthesis of AMP from IMP. This Leishmania infantum protein is Adenylosuccinate synthetase.